A 320-amino-acid polypeptide reads, in one-letter code: Replication-associated protein ORF2 (320 aa).

Residues Y188 and Y192 each act as O-(5'-phospho-DNA)-tyrosine intermediate in the active site.

This sequence belongs to the microviridae Rep protein family.

It catalyses the reaction ATP + (deoxyribonucleotide)n-3'-hydroxyl + 5'-phospho-(deoxyribonucleotide)m = (deoxyribonucleotide)n+m + AMP + diphosphate.. In terms of biological role, plays an essential role in viral DNA replication. Binds the origin of replication and cleaves the dsDNA replicative form I (RFI) and becomes covalently bound to it via phosphotyrosine bond, generating the dsDNA replicative form II (RFII). In turn, viral DNA replication initiates at the 3'-OH of the cleavage site. After one round of rolling circle synthesis, protein ORF2 is linked to the newly synthesized ssDNA and joins the ends of the displaced strand to generate a circular single-stranded molecule ready to be packed into a virion. This Spiroplasma virus 4 (SpV4) protein is Replication-associated protein ORF2.